A 143-amino-acid chain; its full sequence is Transcriptional regulator MraZ (143 aa).

SpoVT-AbrB domains are found at residues 5 to 47 and 76 to 119; these read QYEH…SLEE and AVEC…SKEV.

Belongs to the MraZ family. As to quaternary structure, forms oligomers.

The protein localises to the cytoplasm. Its subcellular location is the nucleoid. This Thermoanaerobacter pseudethanolicus (strain ATCC 33223 / 39E) (Clostridium thermohydrosulfuricum) protein is Transcriptional regulator MraZ.